A 656-amino-acid chain; its full sequence is Replication protein A 70 kDa DNA-binding subunit A (656 aa).

A DNA-binding region (OB) is located at residues A225–L307. Residues C516–C542 form a C4-type zinc finger.

Belongs to the replication factor A protein 1 family. Heterotrimer of RPA1, RPA2 and RPA3 (canonical replication protein A complex). Interacts with RPA2B. As to expression, expressed in root tips, roots, shoot apical meristem (SAM), young leaves, flag leaves and ears, and at lower levels in mature leaves.

Its subcellular location is the nucleus. Functionally, component of the replication protein A complex (RPA) required for DNA recombination, repair and replication. The activity of RPA is mediated by single-stranded DNA binding and protein interactions. Plays an essential role in meiotic and somatic DNA repair, but is dispensable for DNA replication and homologous recombination. Is essential for normal progression through meiosis in pollen mother cells. Is involved in repair of double-strand DNA breaks (DSBs) induced by genotoxic stresses. The sequence is that of Replication protein A 70 kDa DNA-binding subunit A (RPA1A) from Oryza sativa subsp. japonica (Rice).